A 383-amino-acid chain; its full sequence is Dual-specificity RNA methyltransferase RlmN (383 aa).

Glu94 serves as the catalytic Proton acceptor. Residues 100-339 enclose the Radical SAM core domain; sequence DGDRATLCVS…VTVRRTRGDD (240 aa). A disulfide bridge links Cys107 with Cys344. [4Fe-4S] cluster-binding residues include Cys114, Cys118, and Cys121. S-adenosyl-L-methionine-binding positions include 168–169, Ser200, 222–224, and Asn301; these read GE and SLH. Catalysis depends on Cys344, which acts as the S-methylcysteine intermediate.

The protein belongs to the radical SAM superfamily. RlmN family. Requires [4Fe-4S] cluster as cofactor.

It localises to the cytoplasm. It carries out the reaction adenosine(2503) in 23S rRNA + 2 reduced [2Fe-2S]-[ferredoxin] + 2 S-adenosyl-L-methionine = 2-methyladenosine(2503) in 23S rRNA + 5'-deoxyadenosine + L-methionine + 2 oxidized [2Fe-2S]-[ferredoxin] + S-adenosyl-L-homocysteine. It catalyses the reaction adenosine(37) in tRNA + 2 reduced [2Fe-2S]-[ferredoxin] + 2 S-adenosyl-L-methionine = 2-methyladenosine(37) in tRNA + 5'-deoxyadenosine + L-methionine + 2 oxidized [2Fe-2S]-[ferredoxin] + S-adenosyl-L-homocysteine. Its function is as follows. Specifically methylates position 2 of adenine 2503 in 23S rRNA and position 2 of adenine 37 in tRNAs. m2A2503 modification seems to play a crucial role in the proofreading step occurring at the peptidyl transferase center and thus would serve to optimize ribosomal fidelity. The polypeptide is Dual-specificity RNA methyltransferase RlmN (Aliivibrio salmonicida (strain LFI1238) (Vibrio salmonicida (strain LFI1238))).